We begin with the raw amino-acid sequence, 122 residues long: Large ribosomal subunit protein uL14 (122 aa).

The protein belongs to the universal ribosomal protein uL14 family. Part of the 50S ribosomal subunit. Forms a cluster with proteins L3 and L19. In the 70S ribosome, L14 and L19 interact and together make contacts with the 16S rRNA in bridges B5 and B8.

In terms of biological role, binds to 23S rRNA. Forms part of two intersubunit bridges in the 70S ribosome. The chain is Large ribosomal subunit protein uL14 from Bartonella bacilliformis (strain ATCC 35685 / KC583 / Herrer 020/F12,63).